The chain runs to 488 residues: Probable G-protein coupled receptor Mth-like 12 (488 aa).

The first 17 residues, 1-17 (MFLWLKCFCTLIIVTIA), serve as a signal peptide directing secretion. At 18–215 (KNSSAKIPHC…NRRCYRNVMP (198 aa)) the chain is on the extracellular side. 3 N-linked (GlcNAc...) asparagine glycosylation sites follow: Asn-19, Asn-34, and Asn-55. 5 disulfide bridges follow: Cys-27-Cys-81, Cys-83-Cys-88, Cys-92-Cys-189, Cys-93-Cys-104, and Cys-155-Cys-209. Residue Asn-141 is glycosylated (N-linked (GlcNAc...) asparagine). Residues 216-236 (GIAQLSVISVVGFILTLAVYL) traverse the membrane as a helical segment. Residues 237 to 247 (SVEKLRNLLGK) are Cytoplasmic-facing. The helical transmembrane segment at 248 to 268 (CLICSLFSMFMEYFIWTMDYF) threads the bilayer. Residues 269–283 (RLLQSICSAAGYMKY) lie on the Extracellular side of the membrane. The helical transmembrane segment at 284 to 304 (FFSMSSYLWFSVVSFHLWELF) threads the bilayer. Residues 305–315 (TSLNRHEPQYR) are Cytoplasmic-facing. Residues 316–336 (FLIYNTFVWCTAAIPTVVIFS) traverse the membrane as a helical segment. Topologically, residues 337–373 (MNQMWENDPGKSEWLPLVGYFGCSVKDWNSSSWFYSH) are extracellular. Asn-365 carries N-linked (GlcNAc...) asparagine glycosylation. A helical transmembrane segment spans residues 374–394 (IPIVILNSFNVIMFVLTAIYI). At 395–416 (WKVKKGVKSFAQHDERNTTCLE) the chain is on the cytoplasmic side. A helical transmembrane segment spans residues 417–437 (FNVQTYIQFVRLFLIMGASWL). The Extracellular segment spans residues 438–454 (LDQLTRLAEDSHLLLDT). A helical transmembrane segment spans residues 455–475 (IVLNLTVYLNAAFGILIFVLL). The Cytoplasmic portion of the chain corresponds to 476–488 (ILKGSTFKMIMER).

It belongs to the G-protein coupled receptor 2 family. Mth subfamily.

The protein localises to the cell membrane. This chain is Probable G-protein coupled receptor Mth-like 12 (mthl12), found in Drosophila melanogaster (Fruit fly).